A 315-amino-acid polypeptide reads, in one-letter code: Protein MFI (315 aa).

Can homodimerize. Interacts with MFF; the interaction inhibits MFF interaction with DNM1L. As to expression, enriched in the pancreatic beta cell and the testis and is expressed at low levels in other tissues tested.

It localises to the cytoplasm. The protein resides in the cytosol. Its subcellular location is the mitochondrion outer membrane. In terms of biological role, acts as an inhibitor of mitochondrial fission. Interacts with MFF and prevents DNM1L recruitment to mitochondria, promoting a more fused mitochondrial network. The polypeptide is Protein MFI (Mus musculus (Mouse)).